A 97-amino-acid chain; its full sequence is Aspartyl/glutamyl-tRNA(Asn/Gln) amidotransferase subunit C (97 aa).

Belongs to the GatC family. Heterotrimer of A, B and C subunits.

The catalysed reaction is L-glutamyl-tRNA(Gln) + L-glutamine + ATP + H2O = L-glutaminyl-tRNA(Gln) + L-glutamate + ADP + phosphate + H(+). The enzyme catalyses L-aspartyl-tRNA(Asn) + L-glutamine + ATP + H2O = L-asparaginyl-tRNA(Asn) + L-glutamate + ADP + phosphate + 2 H(+). Its function is as follows. Allows the formation of correctly charged Asn-tRNA(Asn) or Gln-tRNA(Gln) through the transamidation of misacylated Asp-tRNA(Asn) or Glu-tRNA(Gln) in organisms which lack either or both of asparaginyl-tRNA or glutaminyl-tRNA synthetases. The reaction takes place in the presence of glutamine and ATP through an activated phospho-Asp-tRNA(Asn) or phospho-Glu-tRNA(Gln). The protein is Aspartyl/glutamyl-tRNA(Asn/Gln) amidotransferase subunit C of Anaeromyxobacter sp. (strain K).